Here is a 159-residue protein sequence, read N- to C-terminus: MEDTLGSEHSVCLSSWDWKNTAGAFELHSVSSPHSLSPTPSFESYSSSPCPAAAETPYSGGGLVGYGLVDFPPAYLPSPGQARLPKGTKVRMSAQRRRKASEREKLRMRTLADALHTLRNYLPPAYSQRGQPLTKIQTLKCTIKYISELTELLNSVKRA.

The disordered stretch occupies residues 79 to 101 (PGQARLPKGTKVRMSAQRRRKAS). Residues 86-100 (KGTKVRMSAQRRRKA) show a composition bias toward basic residues. In terms of domain architecture, bHLH spans 95–149 (QRRRKASEREKLRMRTLADALHTLRNYLPPAYSQRGQPLTKIQTLKCTIKYISEL).

It localises to the nucleus. In terms of biological role, involved in specifying the paraxial, but not dorsal, mesoderm. May regulate the expression of T-box transcription factors required for mesoderm formation and differentiation. In Gallus gallus (Chicken), this protein is Mesogenin-1 (MSGN1).